Consider the following 105-residue polypeptide: Probable molt-inhibiting hormone (105 aa).

An N-terminal signal peptide occupies residues Met-1–Ala-28. 3 disulfides stabilise this stretch: Cys-35–Cys-72, Cys-52–Cys-68, and Cys-55–Cys-81.

Belongs to the arthropod CHH/MIH/GIH/VIH hormone family. Expressed in the postmolt, intermolt, and premolt stages of the shrimp eyestalks and the brain.

It is found in the secreted. Inhibits Y-organs where molting hormone (ecdysteroid) is secreted. A molting cycle is initiated when MIH secretion diminishes or stops. In Metapenaeus ensis (Greasyback shrimp), this protein is Probable molt-inhibiting hormone.